The chain runs to 529 residues: Bifunctional purine biosynthesis protein PurH (529 aa).

The region spanning M1–V148 is the MGS-like domain.

The protein belongs to the PurH family.

It carries out the reaction (6R)-10-formyltetrahydrofolate + 5-amino-1-(5-phospho-beta-D-ribosyl)imidazole-4-carboxamide = 5-formamido-1-(5-phospho-D-ribosyl)imidazole-4-carboxamide + (6S)-5,6,7,8-tetrahydrofolate. The catalysed reaction is IMP + H2O = 5-formamido-1-(5-phospho-D-ribosyl)imidazole-4-carboxamide. It participates in purine metabolism; IMP biosynthesis via de novo pathway; 5-formamido-1-(5-phospho-D-ribosyl)imidazole-4-carboxamide from 5-amino-1-(5-phospho-D-ribosyl)imidazole-4-carboxamide (10-formyl THF route): step 1/1. Its pathway is purine metabolism; IMP biosynthesis via de novo pathway; IMP from 5-formamido-1-(5-phospho-D-ribosyl)imidazole-4-carboxamide: step 1/1. This is Bifunctional purine biosynthesis protein PurH from Wigglesworthia glossinidia brevipalpis.